The primary structure comprises 290 residues: Sodium/potassium-transporting ATPase subunit beta-2 (290 aa).

At 1–39 (MVIQKEKKSCGQVVEEWKEFVWNPRTHQFMGRTGTSWAF) the chain is on the cytoplasmic side. The helical; Signal-anchor for type II membrane protein transmembrane segment at 40 to 67 (ILLFYLVFYGFLTAMFTLTMWVMLQTVS) threads the bilayer. The Extracellular portion of the chain corresponds to 68–290 (DHTPKYQDRL…VAFKLRINKT (223 aa)). Residues Asn96 and Asn118 are each glycosylated (N-linked (GlcNAc...) asparagine). A disulfide bridge connects residues Cys129 and Cys150. N-linked (GlcNAc...) asparagine glycans are attached at residues Asn153 and Asn159. Cys160 and Cys177 form a disulfide bridge. Asn193, Asn197, and Asn238 each carry an N-linked (GlcNAc...) asparagine glycan. An immunoglobulin-like region spans residues 193–290 (NQSMNVTCAG…VAFKLRINKT (98 aa)). The cysteines at positions 200 and 261 are disulfide-linked.

Belongs to the X(+)/potassium ATPases subunit beta family. The sodium/potassium-transporting ATPase is composed of a catalytic alpha subunit, an auxiliary non-catalytic beta subunit and an additional regulatory subunit. Interacts with isoform 2 of BSG.

The protein resides in the cell membrane. In terms of biological role, this is the non-catalytic component of the active enzyme, which catalyzes the hydrolysis of ATP coupled with the exchange of Na(+) and K(+) ions across the plasma membrane. The exact function of the beta-2 subunit is not known. Its function is as follows. Mediates cell adhesion of neurons and astrocytes, and promotes neurite outgrowth. The chain is Sodium/potassium-transporting ATPase subunit beta-2 (ATP1B2) from Homo sapiens (Human).